A 216-amino-acid chain; its full sequence is Ion-translocating oxidoreductase complex subunit G (216 aa).

Residues 14–34 (ALVLGSFGFLAASFVSIIYVI) traverse the membrane as a helical segment. Thr181 carries the FMN phosphoryl threonine modification.

Belongs to the RnfG family. In terms of assembly, the complex is composed of six subunits: RnfA, RnfB, RnfC, RnfD, RnfE and RnfG. The cofactor is FMN.

It is found in the cell inner membrane. In terms of biological role, part of a membrane-bound complex that couples electron transfer with translocation of ions across the membrane. The protein is Ion-translocating oxidoreductase complex subunit G of Buchnera aphidicola subsp. Baizongia pistaciae (strain Bp).